Reading from the N-terminus, the 412-residue chain is Serine hydroxymethyltransferase (412 aa).

Residues leucine 119 and 123–125 (GHL) each bind (6S)-5,6,7,8-tetrahydrofolate. An N6-(pyridoxal phosphate)lysine modification is found at lysine 228.

This sequence belongs to the SHMT family. In terms of assembly, homodimer. Pyridoxal 5'-phosphate serves as cofactor.

The protein resides in the cytoplasm. The enzyme catalyses (6R)-5,10-methylene-5,6,7,8-tetrahydrofolate + glycine + H2O = (6S)-5,6,7,8-tetrahydrofolate + L-serine. It functions in the pathway one-carbon metabolism; tetrahydrofolate interconversion. Its pathway is amino-acid biosynthesis; glycine biosynthesis; glycine from L-serine: step 1/1. Its function is as follows. Catalyzes the reversible interconversion of serine and glycine with tetrahydrofolate (THF) serving as the one-carbon carrier. This reaction serves as the major source of one-carbon groups required for the biosynthesis of purines, thymidylate, methionine, and other important biomolecules. Also exhibits THF-independent aldolase activity toward beta-hydroxyamino acids, producing glycine and aldehydes, via a retro-aldol mechanism. This Thermodesulfovibrio yellowstonii (strain ATCC 51303 / DSM 11347 / YP87) protein is Serine hydroxymethyltransferase.